The following is a 223-amino-acid chain: B-cell antigen receptor complex-associated protein alpha chain (223 aa).

The first 31 residues, 1-31, serve as a signal peptide directing secretion; the sequence is MPEGPQALQSPPATIFLLLISAAGLGPGCQA. An Ig-like C2-type domain is found at 32 to 120; the sequence is LWVEWGPPSV…KIQRSCGTYL (89 aa). Residues 32 to 140 are Extracellular-facing; it reads LWVEWGPPSV…LDMGEGTKNN (109 aa). An intrachain disulfide couples C53 to C104. N-linked (GlcNAc...) asparagine glycosylation is found at N56, N61, N71, and N95. A helical membrane pass occupies residues 141–161; sequence IITAEGIILLICAVVPGTLLL. The Cytoplasmic portion of the chain corresponds to 162–223; sequence FRKRWQNMKF…HIGDAQLEKP (62 aa). The ITAM domain occupies 174 to 202; sequence DIQDDYEDENLYEGLNLDDCSMYEDISRG. Y185 is subject to Phosphotyrosine; by SRC-type Tyr-kinases. Y196 is subject to Phosphotyrosine. Residue R201 is modified to Asymmetric dimethylarginine; by PRMT1. At Y207 the chain carries Phosphotyrosine; by Tyr-kinases.

Heterodimer of alpha and beta chains; disulfide-linked. Part of the B-cell antigen receptor complex where the alpha/beta chain heterodimer is non-covalently associated with an antigen-specific membrane-bound surface immunoglobulin of two heavy chains and two light chains. Interacts through its phosphorylated ITAM domain with the SH2 domains of SYK which stimulates SYK autophosphorylation and activation. Also interacts, when phosphorylated on Tyr-207, with the SH2 domain of BLNK/SLP65, bringing BLNK into proximity with SYK and allowing SYK to phosphorylate BLNK which is necessary for trafficking of the BCR to late endosomes. Interacts with Src-family tyrosine kinases including FYN and LYN, increasing their activity. Phosphorylated on tyrosine, serine and threonine residues upon B-cell activation. Phosphorylation of tyrosine residues by Src-family kinases, including LYN, is an early and essential feature of the BCR signaling cascade. The phosphorylated tyrosines serve as docking sites for SH2-domain containing kinases, leading to their activation which in turn leads to phosphorylation of downstream targets. Phosphorylation of serine and threonine residues may prevent subsequent tyrosine phosphorylation. Post-translationally, arginine methylation in the ITAM domain may interfere with the binding of SYK. It promotes signals leading to B-cell differentiation. B-cells.

The protein localises to the cell membrane. Required in cooperation with CD79B for initiation of the signal transduction cascade activated by binding of antigen to the B-cell antigen receptor complex (BCR) which leads to internalization of the complex, trafficking to late endosomes and antigen presentation. Also required for BCR surface expression and for efficient differentiation of pro- and pre-B-cells. Stimulates SYK autophosphorylation and activation. Binds to BLNK, bringing BLNK into proximity with SYK and allowing SYK to phosphorylate BLNK. Also interacts with and increases activity of some Src-family tyrosine kinases. Represses BCR signaling during development of immature B-cells. The sequence is that of B-cell antigen receptor complex-associated protein alpha chain (CD79A) from Bos taurus (Bovine).